The sequence spans 94 residues: Progonadoliberin-1 (94 aa).

The first 22 residues, 1–22 (MAAKILALWLLLAGTVFPQGCC), serve as a signal peptide directing secretion. Gln-23 carries the post-translational modification Pyrrolidone carboxylic acid. Gly-32 is modified (glycine amide).

It belongs to the GnRH family. Synthesized in preoptic neurons and is transported to the pituitary in the preoptic-hypophyseal axons.

It localises to the secreted. Functionally, stimulates the secretion of gonadotropins. May be responsible for the regulation of the hypothalamic-pituitary-gonadal axis. The sequence is that of Progonadoliberin-1 (gnrh1) from Haplochromis burtoni (Burton's mouthbrooder).